Consider the following 198-residue polypeptide: TYIEVAVVADHRMFKKYNSNLNTIRKWVHEMVNSMNGVYRSMDVHLSLANLEVWSKKDLINVQKDSRETLKSFGEWRERDLLPRISHDNAQLLTAIVFDQQTIGRAYIGGMCDPRHSVGVVMDHSKINLQVAVTMAHELGHNLGMEHDENQCHCDAPSCVMXXXXXXXXXXXXXXCXXXXXXXXXTKHNPQCILNEPL.

The Peptidase M12B domain occupies 1 to 197 (TYIEVAVVAD…HNPQCILNEP (197 aa)). E4 and D88 together coordinate Ca(2+). 3 disulfide bridges follow: C112/C192, C152/C176, and C154/C159. Residue H137 participates in Zn(2+) binding. The active site involves E138. H141 and H147 together coordinate Zn(2+). Residues C192 and N195 each coordinate Ca(2+).

It belongs to the venom metalloproteinase (M12B) family. P-I subfamily. Monomer. It depends on Zn(2+) as a cofactor. In terms of tissue distribution, expressed by the venom gland.

The protein resides in the secreted. Its activity is regulated as follows. Inhibited by the chelating agents EDTA, EGTA and 1,10-phenanthroline. Is not inhibited by serine proteinase inhibitors aprotinin, leupeptin and benzamidine. Zinc metalloprotease that preferentially degrades Aalpha chain of fibrinogen (FGA) (at a dose of 5 ug, whereas at a dose of 10 ug, both FGA and FGB are completely degraded). Degrades fibrin gel in a dose-dependent manner, as well blood clots formed in vitro (thrombolytic activity). Induces hemorrhage (in the dorsal skin of mice), with an MHD of 50 ug. The basal membrane components collagen (all chains of type IV) (COL4A4), fibronectin (FN1), laminin and nidogen are all degraded by this toxin. The sequence is that of Snake venom metalloproteinase BpirMP from Bothrops pirajai (Piraja's lancehead).